A 199-amino-acid polypeptide reads, in one-letter code: Interleukin-11 (199 aa).

Residues 1–21 (MNCVCRLVLVVLSLWPDRVVA) form the signal peptide. The important for interaction with IL11RA and for the stimulation of cell proliferation stretch occupies residues 182–190 (HLTLDWAVR).

The protein belongs to the IL-6 superfamily. In terms of assembly, interacts with either IL11RA1 or IL11RA2 to associate with IL6ST, giving rise to a multimeric signaling complex.

The protein resides in the secreted. Cytokine that stimulates the proliferation of hematopoietic stem cells and megakaryocyte progenitor cells and induces megakaryocyte maturation resulting in increased platelet production. Also promotes the proliferation of hepatocytes in response to liver damage. Binding to its receptor formed by IL6ST and either IL11RA1 or IL11RA2 activates a signaling cascade that promotes cell proliferation, also in the context of various cancers. Signaling leads to the activation of intracellular protein kinases and the phosphorylation of STAT3. The interaction with the membrane-bound IL11RA and IL6ST stimulates 'classic signaling', whereas the binding of IL11 and soluble IL11RA to IL6ST stimulates 'trans-signaling'. The sequence is that of Interleukin-11 from Mus musculus (Mouse).